Reading from the N-terminus, the 482-residue chain is Glutamate synthase [NADPH] small chain (482 aa).

One can recognise a 4Fe-4S ferredoxin-type domain in the interval 39–72 (ERANEQANRCSQCGVPFCQVHCPVSNNIPDWLKL). Positions 95, 99, 105, and 109 each coordinate [4Fe-4S] cluster.

In terms of assembly, aggregate of 4 catalytic active heterodimers, consisting of a large and a small subunit. [4Fe-4S] cluster serves as cofactor.

It carries out the reaction 2 L-glutamate + NADP(+) = L-glutamine + 2-oxoglutarate + NADPH + H(+). It functions in the pathway amino-acid biosynthesis; L-glutamate biosynthesis via GLT pathway; L-glutamate from 2-oxoglutarate and L-glutamine (NADP(+) route): step 1/1. The protein operates within energy metabolism; nitrogen metabolism. The chain is Glutamate synthase [NADPH] small chain (gltD) from Azospirillum brasilense.